The following is a 497-amino-acid chain: Guanosine-5'-triphosphate,3'-diphosphate pyrophosphatase (497 aa).

The protein belongs to the GppA/Ppx family. GppA subfamily.

The catalysed reaction is guanosine 3'-diphosphate 5'-triphosphate + H2O = guanosine 3',5'-bis(diphosphate) + phosphate + H(+). It participates in purine metabolism; ppGpp biosynthesis; ppGpp from GTP: step 2/2. In terms of biological role, catalyzes the conversion of pppGpp to ppGpp. Guanosine pentaphosphate (pppGpp) is a cytoplasmic signaling molecule which together with ppGpp controls the 'stringent response', an adaptive process that allows bacteria to respond to amino acid starvation, resulting in the coordinated regulation of numerous cellular activities. The protein is Guanosine-5'-triphosphate,3'-diphosphate pyrophosphatase of Photobacterium profundum (strain SS9).